The chain runs to 85 residues: Large ribosomal subunit protein bL27 (85 aa).

The disordered stretch occupies residues 1–21; the sequence is MAHKKAGGSTRNGRDSESKRL.

Belongs to the bacterial ribosomal protein bL27 family.

In Photorhabdus laumondii subsp. laumondii (strain DSM 15139 / CIP 105565 / TT01) (Photorhabdus luminescens subsp. laumondii), this protein is Large ribosomal subunit protein bL27.